Consider the following 335-residue polypeptide: MVGIRYDWQELEIRAIYNTPLLELIYQAASVHRQYHDPTKIQVCKLISIKTGGCPEDCSYCAQSSRYKTEVKAEALLEKETVVNIAQKAKETGVSRICMGAAWREVRDNSQFEEVLEMVKDITAMGLEVCCTLGMLTANQARKLEEAGLYAYNHNLDTSQEYYSTIITTRTYSDRLNTIENVRQTNVTVCSGGILGLGETVDDRVGMLQTLANLHPHPESVPINILSQVPGTPLENQPDVPIWDIVRMIATARILMPASDVRLSAGRARLSQVEQAFCFMAGANSIFSSDDNKMLTVTTPCPDYDTDREMLNLLGLGMRPPSQRQEKVASPAVVG.

The 229-residue stretch at 39 to 267 (TKIQVCKLIS…ASDVRLSAGR (229 aa)) folds into the Radical SAM core domain. [4Fe-4S] cluster contacts are provided by Cys54, Cys58, and Cys61. Residues Cys98, Cys130, Cys190, and Arg262 each coordinate [2Fe-2S] cluster.

It belongs to the radical SAM superfamily. Biotin synthase family. As to quaternary structure, homodimer. [4Fe-4S] cluster serves as cofactor. Requires [2Fe-2S] cluster as cofactor.

The enzyme catalyses (4R,5S)-dethiobiotin + (sulfur carrier)-SH + 2 reduced [2Fe-2S]-[ferredoxin] + 2 S-adenosyl-L-methionine = (sulfur carrier)-H + biotin + 2 5'-deoxyadenosine + 2 L-methionine + 2 oxidized [2Fe-2S]-[ferredoxin]. Its pathway is cofactor biosynthesis; biotin biosynthesis; biotin from 7,8-diaminononanoate: step 2/2. In terms of biological role, catalyzes the conversion of dethiobiotin (DTB) to biotin by the insertion of a sulfur atom into dethiobiotin via a radical-based mechanism. This Nostoc punctiforme (strain ATCC 29133 / PCC 73102) protein is Biotin synthase.